The primary structure comprises 63 residues: MASKKVHQINVKGFFDMDVMEVTEQTKEAEYTYDFKEILSEFNGKNVSITVKEENELPVKGVE.

In terms of assembly, octamer.

The protein is SPbeta prophage-derived uncharacterized protein YonK (yonK) of Bacillus subtilis (strain 168).